The primary structure comprises 103 residues: Small ribosomal subunit protein uS10 (103 aa).

This sequence belongs to the universal ribosomal protein uS10 family. Part of the 30S ribosomal subunit.

Functionally, involved in the binding of tRNA to the ribosomes. This is Small ribosomal subunit protein uS10 from Natranaerobius thermophilus (strain ATCC BAA-1301 / DSM 18059 / JW/NM-WN-LF).